We begin with the raw amino-acid sequence, 488 residues long: Bifunctional protein HldE (488 aa).

The ribokinase stretch occupies residues 1–332; sequence MRESFLDTIQ…QELQSQQSAA (332 aa). 208 to 211 is an ATP binding site; that stretch reads NKRE. The active site involves Asp277. Positions 359–488 are cytidylyltransferase; it reads FTNGCFDLLH…TSNIIRKLAS (130 aa).

This sequence in the N-terminal section; belongs to the carbohydrate kinase PfkB family. It in the C-terminal section; belongs to the cytidylyltransferase family. Homodimer.

The catalysed reaction is D-glycero-beta-D-manno-heptose 7-phosphate + ATP = D-glycero-beta-D-manno-heptose 1,7-bisphosphate + ADP + H(+). The enzyme catalyses D-glycero-beta-D-manno-heptose 1-phosphate + ATP + H(+) = ADP-D-glycero-beta-D-manno-heptose + diphosphate. The protein operates within nucleotide-sugar biosynthesis; ADP-L-glycero-beta-D-manno-heptose biosynthesis; ADP-L-glycero-beta-D-manno-heptose from D-glycero-beta-D-manno-heptose 7-phosphate: step 1/4. Its pathway is nucleotide-sugar biosynthesis; ADP-L-glycero-beta-D-manno-heptose biosynthesis; ADP-L-glycero-beta-D-manno-heptose from D-glycero-beta-D-manno-heptose 7-phosphate: step 3/4. Catalyzes the phosphorylation of D-glycero-D-manno-heptose 7-phosphate at the C-1 position to selectively form D-glycero-beta-D-manno-heptose-1,7-bisphosphate. Functionally, catalyzes the ADP transfer from ATP to D-glycero-beta-D-manno-heptose 1-phosphate, yielding ADP-D-glycero-beta-D-manno-heptose. The sequence is that of Bifunctional protein HldE from Methylobacillus flagellatus (strain ATCC 51484 / DSM 6875 / VKM B-1610 / KT).